A 482-amino-acid polypeptide reads, in one-letter code: Capsule synthesis positive regulator AcpB (482 aa).

2 consecutive PRD domains span residues 165–270 (PFEK…YKDI) and 283–395 (EGNL…YTSN).

Belongs to the AtxA/AcpA family.

AcpB and AcpA regulate cap gene expression and capsule synthesis. The chain is Capsule synthesis positive regulator AcpB (acpB) from Bacillus anthracis.